A 230-amino-acid chain; its full sequence is Ribose-5-phosphate isomerase A (230 aa).

Substrate is bound by residues 29–32 (TGST), 85–88 (DGAD), and 99–102 (KGAG). Glu108 functions as the Proton acceptor in the catalytic mechanism. Lys126 contacts substrate.

This sequence belongs to the ribose 5-phosphate isomerase family. As to quaternary structure, homodimer.

It carries out the reaction aldehydo-D-ribose 5-phosphate = D-ribulose 5-phosphate. Its pathway is carbohydrate degradation; pentose phosphate pathway; D-ribose 5-phosphate from D-ribulose 5-phosphate (non-oxidative stage): step 1/1. Catalyzes the reversible conversion of ribose-5-phosphate to ribulose 5-phosphate. In Synechococcus sp. (strain JA-3-3Ab) (Cyanobacteria bacterium Yellowstone A-Prime), this protein is Ribose-5-phosphate isomerase A.